A 921-amino-acid chain; its full sequence is Isoleucine--tRNA ligase (921 aa).

Positions 57-67 match the 'HIGH' region motif; sequence PYANGDIHMGH. Glutamate 552 is an L-isoleucyl-5'-AMP binding site. The short motif at 593-597 is the 'KMSKS' region element; that stretch reads KMSKS. ATP is bound at residue lysine 596. Zn(2+) contacts are provided by cysteine 887, cysteine 890, cysteine 907, and cysteine 910.

It belongs to the class-I aminoacyl-tRNA synthetase family. IleS type 1 subfamily. Monomer. Zn(2+) is required as a cofactor.

The protein resides in the cytoplasm. It carries out the reaction tRNA(Ile) + L-isoleucine + ATP = L-isoleucyl-tRNA(Ile) + AMP + diphosphate. Catalyzes the attachment of isoleucine to tRNA(Ile). As IleRS can inadvertently accommodate and process structurally similar amino acids such as valine, to avoid such errors it has two additional distinct tRNA(Ile)-dependent editing activities. One activity is designated as 'pretransfer' editing and involves the hydrolysis of activated Val-AMP. The other activity is designated 'posttransfer' editing and involves deacylation of mischarged Val-tRNA(Ile). This is Isoleucine--tRNA ligase from Halalkalibacterium halodurans (strain ATCC BAA-125 / DSM 18197 / FERM 7344 / JCM 9153 / C-125) (Bacillus halodurans).